We begin with the raw amino-acid sequence, 845 residues long: RNA-directed RNA polymerase (845 aa).

248 to 255 (GLPYIGKT) provides a ligand contact to GTP. Positions 384-588 (MIYADNIYIL…ENERLIASAA (205 aa)) constitute a RdRp catalytic domain. 2 disordered regions span residues 686–706 (PLDS…KKTL) and 799–845 (AGKS…RRNQ). The span at 833–845 (KNAKRREKQRRNQ) shows a compositional bias: basic residues.

In terms of assembly, interacts with VP3 in the cytoplasm. Exists in multiple phosphorylated forms.

It is found in the virion. It catalyses the reaction RNA(n) + a ribonucleoside 5'-triphosphate = RNA(n+1) + diphosphate. Its function is as follows. RNA-dependent RNA polymerase which is found both free and covalently attached to the genomic RNA. May also contain guanylyl and methyl transferase activities. In Oncorhynchus mykiss (Rainbow trout), this protein is RNA-directed RNA polymerase (VP1).